Reading from the N-terminus, the 457-residue chain is Phosphoglucosamine mutase (457 aa).

Catalysis depends on Ser106, which acts as the Phosphoserine intermediate. Positions 106, 245, 247, and 249 each coordinate Mg(2+). A Phosphoserine modification is found at Ser106.

The protein belongs to the phosphohexose mutase family. It depends on Mg(2+) as a cofactor. In terms of processing, activated by phosphorylation.

It carries out the reaction alpha-D-glucosamine 1-phosphate = D-glucosamine 6-phosphate. Functionally, catalyzes the conversion of glucosamine-6-phosphate to glucosamine-1-phosphate. In Methylibium petroleiphilum (strain ATCC BAA-1232 / LMG 22953 / PM1), this protein is Phosphoglucosamine mutase.